A 142-amino-acid polypeptide reads, in one-letter code: Hemoglobin subunit alpha (142 aa).

One can recognise a Globin domain in the interval 2–142 (VLSAADKTNV…VSTVLTSKYR (141 aa)). S4 carries the phosphoserine modification. Position 8 is an N6-succinyllysine (K8). T9 is modified (phosphothreonine). K12 is subject to N6-succinyllysine. K17 bears the N6-acetyllysine; alternate mark. Residue K17 is modified to N6-succinyllysine; alternate. N6-succinyllysine is present on K41. Position 50 is a phosphoserine (S50). Position 59 (H59) interacts with O2. H88 serves as a coordination point for heme b. A Phosphoserine modification is found at S103. At T109 the chain carries Phosphothreonine. S125 is modified (phosphoserine). Phosphothreonine is present on residues T135 and T138. The residue at position 139 (S139) is a Phosphoserine.

Belongs to the globin family. As to quaternary structure, heterotetramer of two alpha chains and two beta chains. Red blood cells.

In terms of biological role, involved in oxygen transport from the lung to the various peripheral tissues. Functionally, hemopressin acts as an antagonist peptide of the cannabinoid receptor CNR1. Hemopressin-binding efficiently blocks cannabinoid receptor CNR1 and subsequent signaling. This chain is Hemoglobin subunit alpha (HBA), found in Equus zebra (Mountain zebra).